A 187-amino-acid chain; its full sequence is Elongation factor P (187 aa).

Belongs to the elongation factor P family.

It localises to the cytoplasm. It functions in the pathway protein biosynthesis; polypeptide chain elongation. Functionally, involved in peptide bond synthesis. Stimulates efficient translation and peptide-bond synthesis on native or reconstituted 70S ribosomes in vitro. Probably functions indirectly by altering the affinity of the ribosome for aminoacyl-tRNA, thus increasing their reactivity as acceptors for peptidyl transferase. The sequence is that of Elongation factor P from Leifsonia xyli subsp. xyli (strain CTCB07).